We begin with the raw amino-acid sequence, 283 residues long: MIRKAVIPVAGFGTRLLPITKAQPKEMLPVVNKPIVQYVVEDLVEAGVKDILFVTGKGKQAIENHFDVNYELECKLEKSGKYELLKIIKEIDRLGNIFYVRQKEQKGLGDAILYGEEFVGEEYFIAMVGDTIYSKNIVKDLIKAHEKYGCSVIALERVPKEDVYKYGVIDGEEIEKGVYKIKNMVEKPKVEEAPSNLIITGAYLLSPKIFEKIRETPPGRGGEIQITDAMNLLLKEEDIIGVEINCKRYDIGDALGWLKANVEIGAERFPEFREFLKEFVKNL.

Belongs to the UDPGP type 2 family.

It catalyses the reaction alpha-D-glucose 1-phosphate + UTP + H(+) = UDP-alpha-D-glucose + diphosphate. The chain is Putative UTP--glucose-1-phosphate uridylyltransferase from Methanocaldococcus jannaschii (strain ATCC 43067 / DSM 2661 / JAL-1 / JCM 10045 / NBRC 100440) (Methanococcus jannaschii).